Here is a 242-residue protein sequence, read N- to C-terminus: Host range factor p28 (242 aa).

Residues 21 to 131 (YIDEPNDIRL…QSILRGLVNW (111 aa)) enclose the KilA-N domain. The RING-type zinc finger occupies 173–226 (CGICYEVVYSKRLENDRYFGLLDSCNHIFCITCINIWHRTRRETGASDNCPICR).

Belongs to the orthopoxvirus OPG021 family.

The protein localises to the host cytoplasm. It carries out the reaction S-ubiquitinyl-[E2 ubiquitin-conjugating enzyme]-L-cysteine + [acceptor protein]-L-lysine = [E2 ubiquitin-conjugating enzyme]-L-cysteine + N(6)-ubiquitinyl-[acceptor protein]-L-lysine.. Its function is as follows. RING-finger E3 ubiquitin ligase which catalyzes the formation of both 'Lys-48'- and 'Lys-63'-linked polyubiquitin chains. Plays an important role in virulence by acting as an anti-apoptotic factor. This chain is Host range factor p28 (OPG021), found in Cowpox virus (strain Brighton Red) (CPV).